The primary structure comprises 103 residues: uncharacterized protein (103 aa).

The region spanning 12–88 is the EthD domain; that stretch reads ADPAAFDEHY…AAADVANFAS (77 aa).

This is an uncharacterized protein from Rhodococcus erythropolis (Arthrobacter picolinophilus).